The chain runs to 347 residues: Dihydroorotase (347 aa).

Zn(2+) contacts are provided by His17 and His19. Residues His19–Arg21 and Asn45 each bind substrate. Residues Lys102, His139, and His177 each contribute to the Zn(2+) site. Residue Lys102 is modified to N6-carboxylysine. His139 contributes to the substrate binding site. A substrate-binding site is contributed by Leu222. Asp250 is a Zn(2+) binding site. The active site involves Asp250. Residues His254 and Ala266 each contribute to the substrate site.

The protein belongs to the metallo-dependent hydrolases superfamily. DHOase family. Class II DHOase subfamily. In terms of assembly, homodimer. Zn(2+) is required as a cofactor.

It carries out the reaction (S)-dihydroorotate + H2O = N-carbamoyl-L-aspartate + H(+). It participates in pyrimidine metabolism; UMP biosynthesis via de novo pathway; (S)-dihydroorotate from bicarbonate: step 3/3. Functionally, catalyzes the reversible cyclization of carbamoyl aspartate to dihydroorotate. This is Dihydroorotase from Acidovorax sp. (strain JS42).